The primary structure comprises 93 residues: Bombyxin-related peptide B (93 aa).

The first 21 residues, 1 to 21 (MKFVLVLVSLALLVSLASVQG), serve as a signal peptide directing secretion. Disulfide bonds link cysteine 25–cysteine 80, cysteine 37–cysteine 93, and cysteine 79–cysteine 84. A propeptide spans 47–71 (SGAMGAAAMYGTRGWRWAAMGGNRG) (c peptide like).

This sequence belongs to the insulin family. In terms of assembly, heterodimer of a B chain and an A chain linked by two disulfide bonds. As to expression, located in 4 pairs of medial neurosecretory cells in the brain.

Its subcellular location is the secreted. The sequence is that of Bombyxin-related peptide B from Agrius convolvuli (Convolvulus hawk-moth).